A 468-amino-acid chain; its full sequence is Glutamate--tRNA ligase 2 (468 aa).

The 'HIGH' region signature appears at 9–19 (PSPTGFLHIGG). The short motif at 238 to 242 (KLSKR) is the 'KMSKS' region element. Residue K241 participates in ATP binding.

It belongs to the class-I aminoacyl-tRNA synthetase family. Glutamate--tRNA ligase type 1 subfamily. In terms of assembly, monomer.

The protein localises to the cytoplasm. The enzyme catalyses tRNA(Glu) + L-glutamate + ATP = L-glutamyl-tRNA(Glu) + AMP + diphosphate. Its function is as follows. Catalyzes the attachment of glutamate to tRNA(Glu) in a two-step reaction: glutamate is first activated by ATP to form Glu-AMP and then transferred to the acceptor end of tRNA(Glu). In Rhodospirillum centenum (strain ATCC 51521 / SW), this protein is Glutamate--tRNA ligase 2.